Consider the following 499-residue polypeptide: Endoglucanase (499 aa).

The N-terminal stretch at 1–29 (MKRSISIFITCLLITLLTMGGMIASPASA) is a signal peptide. Substrate-binding positions include H65, 69–70 (WY), Y96, and H131. E169 acts as the Proton donor in catalysis. Substrate is bound at residue Y231. E257 functions as the Nucleophile in the catalytic mechanism. Residues 263 to 264 (AS), W291, and 296 to 298 (KQE) each bind substrate. The CBM3 domain maps to 350-499 (QENGISVQYR…GKLIWGTEPN (150 aa)).

The protein belongs to the glycosyl hydrolase 5 (cellulase A) family.

The enzyme catalyses Endohydrolysis of (1-&gt;4)-beta-D-glucosidic linkages in cellulose, lichenin and cereal beta-D-glucans.. In Bacillus subtilis (strain 168), this protein is Endoglucanase (eglS).